A 142-amino-acid polypeptide reads, in one-letter code: Small ribosomal subunit protein uS12z (142 aa).

Pro-61 carries the hydroxyproline modification.

This sequence belongs to the universal ribosomal protein uS12 family.

This chain is Small ribosomal subunit protein uS12z (RPS23A), found in Arabidopsis thaliana (Mouse-ear cress).